Consider the following 297-residue polypeptide: 4-hydroxy-tetrahydrodipicolinate synthase (297 aa).

Thr47 lines the pyruvate pocket. The Proton donor/acceptor role is filled by Tyr135. The active-site Schiff-base intermediate with substrate is the Lys163. Ile205 is a binding site for pyruvate.

It belongs to the DapA family. In terms of assembly, homotetramer; dimer of dimers.

The protein localises to the cytoplasm. The enzyme catalyses L-aspartate 4-semialdehyde + pyruvate = (2S,4S)-4-hydroxy-2,3,4,5-tetrahydrodipicolinate + H2O + H(+). It functions in the pathway amino-acid biosynthesis; L-lysine biosynthesis via DAP pathway; (S)-tetrahydrodipicolinate from L-aspartate: step 3/4. In terms of biological role, catalyzes the condensation of (S)-aspartate-beta-semialdehyde [(S)-ASA] and pyruvate to 4-hydroxy-tetrahydrodipicolinate (HTPA). This chain is 4-hydroxy-tetrahydrodipicolinate synthase, found in Dehalococcoides mccartyi (strain CBDB1).